The chain runs to 285 residues: tRNA uridine(34) hydroxylase (285 aa).

A Rhodanese domain is found at arginine 130 to leucine 225. The Cysteine persulfide intermediate role is filled by cysteine 185.

It belongs to the TrhO family.

The catalysed reaction is uridine(34) in tRNA + AH2 + O2 = 5-hydroxyuridine(34) in tRNA + A + H2O. Its function is as follows. Catalyzes oxygen-dependent 5-hydroxyuridine (ho5U) modification at position 34 in tRNAs. The polypeptide is tRNA uridine(34) hydroxylase (Rhodococcus opacus (strain B4)).